Reading from the N-terminus, the 354-residue chain is Protein Wnt-8a (354 aa).

Positions 1 to 19 are cleaved as a signal peptide; it reads MGHLLMLWVAAGMCYPALG. Cys-54 and Cys-65 are oxidised to a cystine. Residue Asn-103 is glycosylated (N-linked (GlcNAc...) asparagine). 10 disulfide bridges follow: Cys-104–Cys-112, Cys-114–Cys-132, Cys-180–Cys-194, Cys-182–Cys-189, Cys-259–Cys-297, Cys-275–Cys-290, Cys-294–Cys-336, Cys-312–Cys-327, Cys-314–Cys-324, and Cys-319–Cys-320. Ser-186 carries O-palmitoleoyl serine lipidation. Asn-262 carries N-linked (GlcNAc...) asparagine glycosylation.

Belongs to the Wnt family. As to quaternary structure, forms a soluble 1:1 complex with AFM; this prevents oligomerization and is required for prolonged biological activity. The complex with AFM may represent the physiological form in body fluids. Palmitoleoylation is required for efficient binding to frizzled receptors. Depalmitoleoylation leads to Wnt signaling pathway inhibition. In terms of processing, proteolytic processing by TIKI1 and TIKI2 promotes oxidation and formation of large disulfide-bond oligomers, leading to inactivation of WNT8A.

It localises to the secreted. The protein resides in the extracellular space. The protein localises to the extracellular matrix. Ligand for members of the frizzled family of seven transmembrane receptors. Plays a role in embryonic patterning. The sequence is that of Protein Wnt-8a (Wnt8a) from Mus musculus (Mouse).